We begin with the raw amino-acid sequence, 248 residues long: UPF0246 protein FN1762 (248 aa).

It belongs to the UPF0246 family.

The protein is UPF0246 protein FN1762 of Fusobacterium nucleatum subsp. nucleatum (strain ATCC 25586 / DSM 15643 / BCRC 10681 / CIP 101130 / JCM 8532 / KCTC 2640 / LMG 13131 / VPI 4355).